Consider the following 172-residue polypeptide: Endoribonuclease YbeY (172 aa).

Residues H136, H140, and H146 each coordinate Zn(2+).

This sequence belongs to the endoribonuclease YbeY family. The cofactor is Zn(2+).

Its subcellular location is the cytoplasm. Functionally, single strand-specific metallo-endoribonuclease involved in late-stage 70S ribosome quality control and in maturation of the 3' terminus of the 16S rRNA. This is Endoribonuclease YbeY from Rickettsia canadensis (strain McKiel).